A 423-amino-acid chain; its full sequence is Amino sugar nitrososynthase RubN8 (423 aa).

This sequence belongs to the acyl-CoA dehydrogenase family. The cofactor is FAD.

It functions in the pathway antibiotic biosynthesis. Functionally, nitrososynthase involved in the biosynthesis of rubradirin, an ansamycin antibiotic. In vitro, catalyzes the double-oxidation of TDP-L-epi-vancosamine to TDP-L-epi-vancosonitrose. In vivo, probably catalyzes the formation of D-rubranitrose, the nitro sugar moiety of rubradirin. The protein is Amino sugar nitrososynthase RubN8 of Streptomyces rubradiris (Streptomyces achromogenes subsp. rubradiris).